Consider the following 109-residue polypeptide: Mitochondrial import receptor subunit TOM22 homolog (109 aa).

The Cytoplasmic segment spans residues 1 to 60 (MALVRDDFDDIPDSEIHETIVERIEGLGEMFPDALRSAVHSTVDWSIWGVKGVFSLTKST). The chain crosses the membrane as a helical span at residues 61 to 77 (IWVVSTTSLIAFLPYII). Residues 78–109 (EKERSDLEKTQVAQQRQMLLGPSAAIQQAKTA) are Mitochondrial intermembrane-facing.

Belongs to the Tom22 family. In terms of assembly, forms part of the preprotein translocase complex of the outer mitochondrial membrane (TOM complex).

It is found in the mitochondrion outer membrane. In terms of biological role, central receptor component of the translocase of the outer membrane of mitochondria (TOM complex) responsible for the recognition and translocation of cytosolically synthesized mitochondrial preproteins. Together with the peripheral receptor tomm-20 functions as the transit peptide receptor and facilitates the movement of preproteins into the translocation pore. This is Mitochondrial import receptor subunit TOM22 homolog from Caenorhabditis elegans.